Reading from the N-terminus, the 780-residue chain is ATP-dependent 6-phosphofructokinase, muscle type (780 aa).

Threonine 2 carries the post-translational modification N-acetylthreonine. Residues 2 to 390 form an N-terminal catalytic PFK domain 1 region; sequence THEEHHAAKT…NWEVYKLLAH (389 aa). Residues glycine 25, 88 to 89, and 118 to 121 contribute to the ATP site; these read RC and GDGS. Aspartate 119 contacts Mg(2+). Serine 133 carries the post-translational modification Phosphoserine. Substrate is bound by residues 164-166, arginine 201, 208-210, glutamate 264, arginine 292, and 298-301; these read SID, MGR, and HVQR. Aspartate 166 acts as the Proton acceptor in catalysis. Residue serine 377 is modified to Phosphoserine. Residues 391 to 401 are interdomain linker; the sequence is VRPPVSKSGSH. Positions 402-780 are C-terminal regulatory PFK domain 2; that stretch reads TVAVMNVGAP…TRKRSGEGAV (379 aa). Residues arginine 471 and 528–532 contribute to the beta-D-fructose 2,6-bisphosphate site; that span reads TVSNN. O-linked (GlcNAc) serine glycosylation occurs at serine 530. Lysine 557 bears the N6-(2-hydroxyisobutyryl)lysine mark. Beta-D-fructose 2,6-bisphosphate-binding positions include arginine 566, 573 to 575, glutamate 629, arginine 655, and 661 to 664; these read MGG and HMQQ. Position 667 is a phosphoserine (serine 667). Position 735 (arginine 735) interacts with beta-D-fructose 2,6-bisphosphate. A Phosphoserine modification is found at serine 775.

It belongs to the phosphofructokinase type A (PFKA) family. ATP-dependent PFK group I subfamily. Eukaryotic two domain clade 'E' sub-subfamily. In terms of assembly, homo- and heterotetramers. Phosphofructokinase (PFK) enzyme functions as a tetramer composed of different combinations of 3 types of subunits, called PFKM (M), PFKL (L) and PFKP (P). The composition of the PFK tetramer differs according to the tissue type it is present in. The kinetic and regulatory properties of the tetrameric enzyme are dependent on the subunit composition, hence can vary across tissues. Interacts (via C-terminus) with HK1 (via N-terminal spermatogenic cell-specific region). The cofactor is Mg(2+). In terms of processing, glcNAcylation decreases enzyme activity.

It is found in the cytoplasm. It catalyses the reaction beta-D-fructose 6-phosphate + ATP = beta-D-fructose 1,6-bisphosphate + ADP + H(+). It participates in carbohydrate degradation; glycolysis; D-glyceraldehyde 3-phosphate and glycerone phosphate from D-glucose: step 3/4. With respect to regulation, allosterically activated by ADP, AMP, or fructose 2,6-bisphosphate, and allosterically inhibited by ATP or citrate. Functionally, catalyzes the phosphorylation of D-fructose 6-phosphate to fructose 1,6-bisphosphate by ATP, the first committing step of glycolysis. The polypeptide is ATP-dependent 6-phosphofructokinase, muscle type (PFKM) (Macaca fascicularis (Crab-eating macaque)).